The following is a 430-amino-acid chain: Adenylosuccinate synthetase (430 aa).

Residues 11 to 17 and 39 to 41 each bind GTP; these read GDEGKGK and GHS. Asp12 serves as the catalytic Proton acceptor. Mg(2+) is bound by residues Asp12 and Gly39. IMP contacts are provided by residues 12–15, 37–40, Thr129, Arg143, Asn221, Thr236, and Arg300; these read DEGK and NAGH. His40 serves as the catalytic Proton donor. 296–302 serves as a coordination point for substrate; it reads VSTGRKR. GTP is bound by residues Arg302, 328 to 330, and 412 to 414; these read KLD and GTG.

The protein belongs to the adenylosuccinate synthetase family. In terms of assembly, homodimer. Mg(2+) is required as a cofactor.

The protein resides in the cytoplasm. The catalysed reaction is IMP + L-aspartate + GTP = N(6)-(1,2-dicarboxyethyl)-AMP + GDP + phosphate + 2 H(+). Its pathway is purine metabolism; AMP biosynthesis via de novo pathway; AMP from IMP: step 1/2. Functionally, plays an important role in the de novo pathway and in the salvage pathway of purine nucleotide biosynthesis. Catalyzes the first committed step in the biosynthesis of AMP from IMP. This chain is Adenylosuccinate synthetase, found in Neurospora crassa (strain ATCC 24698 / 74-OR23-1A / CBS 708.71 / DSM 1257 / FGSC 987).